Here is a 328-residue protein sequence, read N- to C-terminus: Malate dehydrogenase (328 aa).

12-18 (GAAGQIG) is a binding site for NAD(+). The substrate site is built by R95 and R101. NAD(+)-binding positions include N108, Q115, and 132-134 (VGN). N134 and R165 together coordinate substrate. The active-site Proton acceptor is the H190.

This sequence belongs to the LDH/MDH superfamily. MDH type 2 family.

The enzyme catalyses (S)-malate + NAD(+) = oxaloacetate + NADH + H(+). Catalyzes the reversible oxidation of malate to oxaloacetate. This chain is Malate dehydrogenase, found in Methylibium petroleiphilum (strain ATCC BAA-1232 / LMG 22953 / PM1).